A 975-amino-acid polypeptide reads, in one-letter code: Cation-chloride cotransporter 1 (975 aa).

Disordered regions lie at residues 1–29 (MDSGDIEEAGGNGEEEFRSGPRLGGSKYR) and 104–124 (EQIQAPSSPRDGEDISITQGH). At 1-132 (MDSGDIEEAG…GHPKPPALKM (132 aa)) the chain is on the cytoplasmic side. A helical membrane pass occupies residues 133 to 153 (GTMMGVFVPCLQNILGIIYYI). Topologically, residues 154–167 (RFTWIVGMAGIGQG) are extracellular. A helical membrane pass occupies residues 168-188 (LVLVFLCGLCTFLTTISLSAI). The Cytoplasmic portion of the chain corresponds to 189-214 (ATNGAMKGGGPYYLIGRALGPEVGIS). The chain crosses the membrane as a helical span at residues 215–235 (IGLCFFLGNAVAGALYVLGAV). The Extracellular portion of the chain corresponds to 236–273 (ETFLKAFPAAGIFRETITKVNGTAVSESIQSPNSHDLQ). N-linked (GlcNAc...) asparagine glycosylation occurs at N256. Residues 274–294 (VYGIVVTILLCFIVFGGVKMI) traverse the membrane as a helical segment. At 295 to 296 (NR) the chain is on the cytoplasmic side. A helical transmembrane segment spans residues 297–317 (VAPAFLVPVLLSIFCIFIGIF). At 318–359 (LAKTDDPDNGITGLRLKSFKDNWGSAYQMTNDAGIPDPTGGT) the chain is on the extracellular side. Residues 360-380 (YWSFNELVGLFFPAVTGIMAG) traverse the membrane as a helical segment. The Cytoplasmic segment spans residues 381–398 (SNRSASLKDTQKSIPVGT). Residues 399–419 (LAATLTTTSLYLISVLFFGAV) traverse the membrane as a helical segment. Residues 420–434 (ATRDKLLTDRLLTAT) lie on the Extracellular side of the membrane. Residues 435–455 (IAWPFPAIVHVGIILSTLGAA) traverse the membrane as a helical segment. Topologically, residues 456-490 (LQSLTGAPRLLAAIANDDILPILNYFKVADTSEPH) are cytoplasmic. The helical transmembrane segment at 491–511 (IATLFTAFICIGCVVIGNLDL) threads the bilayer. Over 512–515 (ITPT) the chain is Extracellular. The helical transmembrane segment at 516–536 (VTMFYLLCYSGVNLSCFLLDL) threads the bilayer. The Cytoplasmic portion of the chain corresponds to 537–544 (LDAPSWRP). Residues 545–565 (RWKYHHWSLSFVGASLCIVIM) traverse the membrane as a helical segment. The Extracellular segment spans residues 566–571 (FLISWS). Residues 572–592 (FTVVAIALASLIYKYVGLKGK) traverse the membrane as a helical segment. Residues 593-975 (AGDWGDGFKS…YHRDVVTLFT (383 aa)) lie on the Cytoplasmic side of the membrane.

The protein belongs to the SLC12A transporter family. In terms of tissue distribution, expressed in young seedlings cotyledon tips, plant vasculature, root tips and axillary buds. Expressed in root vascular strand in the pericycle and other parenchyma cells bordering xylem vessels. Expressed in the xylem/symplast boundaries of rosette stems, rosette leaves and cauline leaves. Expressed in stipules, trichomes and hydathodes. Expressed in pollen grains.

The protein localises to the membrane. Functionally, cation/chloride cotransporter that mediates potassium-chloride and sodium-chloride cotransports. Involved in plant development and Cl(-) homeostasis. May be involved in long distance Cl(-) transport. Does not function as an H(+)-dependent cotransporter. The polypeptide is Cation-chloride cotransporter 1 (CCC1) (Arabidopsis thaliana (Mouse-ear cress)).